The following is a 346-amino-acid chain: L-threonine dehydratase catabolic TdcB (346 aa).

Position 59–60 (59–60 (FT)) interacts with AMP. K64 is modified (N6-(pyridoxal phosphate)lysine). Residues Q94, 125 to 126 (GY), and N321 contribute to the AMP site.

This sequence belongs to the serine/threonine dehydratase family. As to quaternary structure, in the native structure, TdcB is in a dimeric form, whereas in the TdcB-AMP complex, it exists in a tetrameric form (dimer of dimers). The cofactor is pyridoxal 5'-phosphate.

The catalysed reaction is L-threonine = 2-oxobutanoate + NH4(+). Its pathway is amino-acid degradation; L-threonine degradation via propanoate pathway; propanoate from L-threonine: step 1/4. With respect to regulation, each protein molecule can bind up to four molecules of AMP, which act as an allosteric activator to the enzyme. In terms of biological role, catalyzes the anaerobic formation of alpha-ketobutyrate and ammonia from threonine in a two-step reaction. The first step involved a dehydration of threonine and a production of enamine intermediates (aminocrotonate), which tautomerizes to its imine form (iminobutyrate). Both intermediates are unstable and short-lived. The second step is the nonenzymatic hydrolysis of the enamine/imine intermediates to form 2-ketobutyrate and free ammonia. In the low water environment of the cell, the second step is accelerated by RidA. The protein is L-threonine dehydratase catabolic TdcB (tdcB) of Staphylococcus aureus (strain Mu50 / ATCC 700699).